The chain runs to 330 residues: Aspartate--ammonia ligase (330 aa).

Belongs to the class-II aminoacyl-tRNA synthetase family. AsnA subfamily.

Its subcellular location is the cytoplasm. It carries out the reaction L-aspartate + NH4(+) + ATP = L-asparagine + AMP + diphosphate + H(+). It participates in amino-acid biosynthesis; L-asparagine biosynthesis; L-asparagine from L-aspartate (ammonia route): step 1/1. The sequence is that of Aspartate--ammonia ligase from Histophilus somni (strain 2336) (Haemophilus somnus).